The chain runs to 261 residues: High-affinity zinc uptake system membrane protein ZnuB (261 aa).

7 helical membrane-spanning segments follow: residues 8–28, 54–74, 84–104, 125–145, 171–191, 214–234, and 236–256; these read ALLT…FVVW, VNPY…MVWL, TLLG…VGLL, TDLI…IYFW, ILMI…GALI, VGWA…LSAF, and DTAA…LSLF.

This sequence belongs to the ABC-3 integral membrane protein family.

The protein localises to the cell inner membrane. Involved in the high-affinity zinc uptake transport system. This Haemophilus influenzae (strain ATCC 51907 / DSM 11121 / KW20 / Rd) protein is High-affinity zinc uptake system membrane protein ZnuB (znuB).